A 206-amino-acid chain; its full sequence is Large ribosomal subunit protein uL13 (206 aa).

Belongs to the universal ribosomal protein uL13 family.

This is Large ribosomal subunit protein uL13 (RPL13A) from Picea mariana (Black spruce).